The primary structure comprises 275 residues: Undecaprenyl-diphosphatase (275 aa).

8 helical membrane passes run 2–22 (LDIF…FLPI), 43–63 (FINM…IVIY), 83–103 (WQIW…GLPL), 111–131 (MTSW…FIVL), 161–181 (VLSM…AMLI), 186–206 (YVAT…ASLL), 225–245 (ILLV…KFLL), and 255–275 (PFGW…LVFA).

The protein belongs to the UppP family.

It localises to the cell membrane. The catalysed reaction is di-trans,octa-cis-undecaprenyl diphosphate + H2O = di-trans,octa-cis-undecaprenyl phosphate + phosphate + H(+). In terms of biological role, catalyzes the dephosphorylation of undecaprenyl diphosphate (UPP). Confers resistance to bacitracin. This is Undecaprenyl-diphosphatase from Lactobacillus delbrueckii subsp. bulgaricus (strain ATCC 11842 / DSM 20081 / BCRC 10696 / JCM 1002 / NBRC 13953 / NCIMB 11778 / NCTC 12712 / WDCM 00102 / Lb 14).